Consider the following 31-residue polypeptide: Photosystem II reaction center protein T (31 aa).

The chain crosses the membrane as a helical span at residues 3 to 23 (ALVYTFLLVGTLGIIFFSIFF).

It belongs to the PsbT family. PSII is composed of 1 copy each of membrane proteins PsbA, PsbB, PsbC, PsbD, PsbE, PsbF, PsbH, PsbI, PsbJ, PsbK, PsbL, PsbM, PsbT, PsbY, PsbZ, Psb30/Ycf12, at least 3 peripheral proteins of the oxygen-evolving complex and a large number of cofactors. It forms dimeric complexes.

The protein resides in the plastid. It is found in the chloroplast thylakoid membrane. Found at the monomer-monomer interface of the photosystem II (PS II) dimer, plays a role in assembly and dimerization of PSII. PSII is a light-driven water plastoquinone oxidoreductase, using light energy to abstract electrons from H(2)O, generating a proton gradient subsequently used for ATP formation. The chain is Photosystem II reaction center protein T from Chlamydomonas reinhardtii (Chlamydomonas smithii).